Reading from the N-terminus, the 327-residue chain is Zinc transport protein ZntB (327 aa).

The Cytoplasmic portion of the chain corresponds to methionine 1–methionine 273. A helical membrane pass occupies residues alanine 274–isoleucine 294. Residues proline 295 to glutamine 300 lie on the Periplasmic side of the membrane. Residues phenylalanine 301 to leucine 321 form a helical membrane-spanning segment. Residues histidine 322–leucine 327 are Cytoplasmic-facing.

Belongs to the CorA metal ion transporter (MIT) (TC 1.A.35) family.

Its subcellular location is the cell inner membrane. The catalysed reaction is Zn(2+)(out) + H(+)(out) = Zn(2+)(in) + H(+)(in). Zinc transporter. Acts as a Zn(2+):proton symporter, which likely mediates zinc ion uptake. This is Zinc transport protein ZntB from Escherichia coli O8 (strain IAI1).